A 569-amino-acid polypeptide reads, in one-letter code: Proline--tRNA ligase (569 aa).

This sequence belongs to the class-II aminoacyl-tRNA synthetase family. ProS type 1 subfamily. As to quaternary structure, homodimer.

The protein localises to the cytoplasm. It catalyses the reaction tRNA(Pro) + L-proline + ATP = L-prolyl-tRNA(Pro) + AMP + diphosphate. Its function is as follows. Catalyzes the attachment of proline to tRNA(Pro) in a two-step reaction: proline is first activated by ATP to form Pro-AMP and then transferred to the acceptor end of tRNA(Pro). As ProRS can inadvertently accommodate and process non-cognate amino acids such as alanine and cysteine, to avoid such errors it has two additional distinct editing activities against alanine. One activity is designated as 'pretransfer' editing and involves the tRNA(Pro)-independent hydrolysis of activated Ala-AMP. The other activity is designated 'posttransfer' editing and involves deacylation of mischarged Ala-tRNA(Pro). The misacylated Cys-tRNA(Pro) is not edited by ProRS. This is Proline--tRNA ligase from Legionella pneumophila (strain Paris).